Consider the following 185-residue polypeptide: Large ribosomal subunit protein bL17 (185 aa).

Belongs to the bacterial ribosomal protein bL17 family. Part of the 50S ribosomal subunit. Contacts protein L32.

The polypeptide is Large ribosomal subunit protein bL17 (Rhodococcus erythropolis (strain PR4 / NBRC 100887)).